The primary structure comprises 84 residues: Cell division protein CrgA (84 aa).

The next 2 membrane-spanning stretches (helical) occupy residues 31 to 51 (VAPVMLAMFLIGLAWIVVFYV) and 60 to 80 (ALDNWNIVVGFGFIAAGFGVS).

Belongs to the CrgA family.

It is found in the cell membrane. Involved in cell division. Coordinates growth and cell division. Required for the formation of the sporulation septa. This Streptomyces avermitilis (strain ATCC 31267 / DSM 46492 / JCM 5070 / NBRC 14893 / NCIMB 12804 / NRRL 8165 / MA-4680) protein is Cell division protein CrgA.